We begin with the raw amino-acid sequence, 48 residues long: Photosystem II reaction center protein K (48 aa).

Residues 1–11 (MFPSTNQEVLA) constitute a propeptide that is removed on maturation. The helical transmembrane segment at 23 to 43 (IVDVLPIIPLLFLLLAFVWQA) threads the bilayer.

It belongs to the PsbK family. As to quaternary structure, PSII is composed of 1 copy each of membrane proteins PsbA, PsbB, PsbC, PsbD, PsbE, PsbF, PsbH, PsbI, PsbJ, PsbK, PsbL, PsbM, PsbT, PsbY, PsbZ, Psb30/Ycf12, at least 3 peripheral proteins of the oxygen-evolving complex and a large number of cofactors. It forms dimeric complexes.

It is found in the plastid. The protein resides in the chloroplast thylakoid membrane. In terms of biological role, one of the components of the core complex of photosystem II (PSII). PSII is a light-driven water:plastoquinone oxidoreductase that uses light energy to abstract electrons from H(2)O, generating O(2) and a proton gradient subsequently used for ATP formation. It consists of a core antenna complex that captures photons, and an electron transfer chain that converts photonic excitation into a charge separation. The protein is Photosystem II reaction center protein K of Euglena sanguinea.